A 150-amino-acid chain; its full sequence is Large ribosomal subunit protein bL9 (150 aa).

This sequence belongs to the bacterial ribosomal protein bL9 family.

Functionally, binds to the 23S rRNA. The sequence is that of Large ribosomal subunit protein bL9 from Colwellia psychrerythraea (strain 34H / ATCC BAA-681) (Vibrio psychroerythus).